Consider the following 250-residue polypeptide: Probable transcriptional regulatory protein Nther_1800 (250 aa).

The protein belongs to the TACO1 family.

It localises to the cytoplasm. The sequence is that of Probable transcriptional regulatory protein Nther_1800 from Natranaerobius thermophilus (strain ATCC BAA-1301 / DSM 18059 / JW/NM-WN-LF).